The sequence spans 606 residues: V-type proton ATPase catalytic subunit A (606 aa).

239 to 246 (GAFGCGKT) is a binding site for ATP.

The protein belongs to the ATPase alpha/beta chains family. As to quaternary structure, V-ATPase is a heteromultimeric enzyme made up of two complexes: the ATP-hydrolytic V1 complex and the proton translocation V0 complex. The V1 complex consists of three catalytic AB heterodimers that form a heterohexamer, three peripheral stalks each consisting of EG heterodimers, one central rotor including subunits D and F, and the regulatory subunits C and H. The proton translocation complex V0 consists of the proton transport subunit a, a ring of proteolipid subunits c9c'', rotary subunit d, subunits e and f, and the accessory subunits vah-19/Ac45 and vah-20/PRR.

The enzyme catalyses ATP + H2O + 4 H(+)(in) = ADP + phosphate + 5 H(+)(out). Functionally, catalytic subunit of the V1 complex of vacuolar(H+)-ATPase (V-ATPase), a multisubunit enzyme composed of a peripheral complex (V1) that hydrolyzes ATP and a membrane integral complex (V0) that translocates protons. V-ATPase is responsible for acidifying and maintaining the pH of intracellular compartments and in some cell types, is targeted to the plasma membrane, where it is responsible for acidifying the extracellular environment. Required along with other vacuolar ATPase components for the removal of protein aggregates which form in immature oocytes in the distal gonad. This removal occurs as the oocytes mature and move to the proximal gonad, is triggered by the introduction of sperm through mating and occurs before fertilization. The introduction of sperm triggers V-ATPase accumulation in proximal oocytes and induces lysosomal acidification which leads to engulfing of protein aggregates by lysosomes and subsequent clearance of the aggregates. Lysosomal acidification also leads to changes in mitochondrial morphology and function. Mitochondria in distal immature oocytes are fragmented, produce high levels of reactive oxygen species (ROS) and have high membrane potential, indicative of metabolic inactivity. In contrast, mitochondria in proximal mature oocytes are tubular with lower ROS levels and membrane potential, indicative of an active metabolic state required for aggregate mobilization before clearance. Involved in receptor-mediated endocytosis. The sequence is that of V-type proton ATPase catalytic subunit A from Caenorhabditis briggsae.